A 565-amino-acid polypeptide reads, in one-letter code: Potassium-transporting ATPase potassium-binding subunit (565 aa).

12 helical membrane passes run 6–26 (LMLL…LGSL), 63–83 (LLAI…LLMA), 132–152 (GLGV…FALI), 175–195 (LYVL…QGVI), 250–270 (LSNL…CFAF), 283–303 (LLWT…YAEL), 327–347 (FGIL…CGAV), 354–374 (FTAL…VVFG), 379–399 (GLYG…LMIG), 418–438 (ALAI…ALLC), 483–503 (LLLA…VMAI), and 524–544 (GALF…LTFI).

The protein belongs to the KdpA family. In terms of assembly, the system is composed of three essential subunits: KdpA, KdpB and KdpC.

Its subcellular location is the cell inner membrane. Its function is as follows. Part of the high-affinity ATP-driven potassium transport (or Kdp) system, which catalyzes the hydrolysis of ATP coupled with the electrogenic transport of potassium into the cytoplasm. This subunit binds the periplasmic potassium ions and delivers the ions to the membrane domain of KdpB through an intramembrane tunnel. In Edwardsiella ictaluri (strain 93-146), this protein is Potassium-transporting ATPase potassium-binding subunit.